The chain runs to 227 residues: Abasic site processing protein YoaM (227 aa).

C2 (nucleophile) is an active-site residue. At C2 the chain carries Thiazolidine linkage to a ring-opened DNA abasic site. The active site involves E106.

This sequence belongs to the SOS response-associated peptidase family.

With respect to regulation, formation and reversal of DNA-protein cross-link depends on DNA context. Catalyzes formation of the thiazolidine linkage in presence of abasic sites in single-stranded DNA. Mediates the reversal of the thiazolidine cross-link in presence of double stranded DNA. In terms of biological role, sensor of abasic sites in single-stranded DNA (ssDNA) required to preserve genome integrity by promoting error-free repair of abasic sites. Recognizes and binds abasic sites in ssDNA at replication forks and chemically modifies the lesion by forming a covalent cross-link with DNA: forms a stable thiazolidine linkage between a ring-opened abasic site and the alpha-amino and sulfhydryl substituents of its N-terminal catalytic cysteine residue. The DNA-protein cross-link is then reversed: able to catalyze the reversal of the thiazolidine cross-link and cycle between a cross-link and a non-cross-linked state depending on DNA context: mediates self-reversal of the thiazolidine cross-link in double stranded DNA. May act as a protease: mediates autocatalytic processing of its N-terminal methionine in order to expose the catalytic cysteine. This Bacillus subtilis (strain 168) protein is Abasic site processing protein YoaM (yoaM).